The following is a 170-amino-acid chain: ATP synthase subunit b (170 aa).

The helical transmembrane segment at 30 to 50 (FFFVLAIFLVVLAVIGTFVVP) threads the bilayer.

Belongs to the ATPase B chain family. F-type ATPases have 2 components, F(1) - the catalytic core - and F(0) - the membrane proton channel. F(1) has five subunits: alpha(3), beta(3), gamma(1), delta(1), epsilon(1). F(0) has three main subunits: a(1), b(2) and c(10-14). The alpha and beta chains form an alternating ring which encloses part of the gamma chain. F(1) is attached to F(0) by a central stalk formed by the gamma and epsilon chains, while a peripheral stalk is formed by the delta and b chains.

Its subcellular location is the cell membrane. F(1)F(0) ATP synthase produces ATP from ADP in the presence of a proton or sodium gradient. F-type ATPases consist of two structural domains, F(1) containing the extramembraneous catalytic core and F(0) containing the membrane proton channel, linked together by a central stalk and a peripheral stalk. During catalysis, ATP synthesis in the catalytic domain of F(1) is coupled via a rotary mechanism of the central stalk subunits to proton translocation. In terms of biological role, component of the F(0) channel, it forms part of the peripheral stalk, linking F(1) to F(0). The polypeptide is ATP synthase subunit b (Mycobacterium marinum (strain ATCC BAA-535 / M)).